We begin with the raw amino-acid sequence, 306 residues long: Anamorsin (306 aa).

The tract at residues 6–172 (IAPGQRVAVI…KPNFEVGSSS (167 aa)) is N-terminal SAM-like domain. The linker stretch occupies residues 173–224 (QLKLSFAKKTSPSGKPSVDPATAKLWTLSASDMNDEEMDLLDSDELLDSEDL). Residues cysteine 237, cysteine 246, cysteine 249, and cysteine 251 each contribute to the [2Fe-2S] cluster site. The fe-S binding site A stretch occupies residues 237 to 251 (CKEKGKKKACKNCTC). [4Fe-4S] cluster-binding residues include cysteine 270, cysteine 273, cysteine 281, and cysteine 284. 2 short sequence motifs (cx2C motif) span residues 270–273 (CGNC) and 281–284 (CASC). The interval 270–284 (CGNCYLGDAFRCASC) is fe-S binding site B.

The protein belongs to the anamorsin family. Monomer. Interacts with NDOR1. Interacts with CHCHD4. [2Fe-2S] cluster is required as a cofactor. It depends on [4Fe-4S] cluster as a cofactor.

Its subcellular location is the cytoplasm. It localises to the nucleus. The protein localises to the mitochondrion intermembrane space. Functionally, component of the cytosolic iron-sulfur (Fe-S) protein assembly (CIA) machinery required for the maturation of extramitochondrial Fe-S proteins. Part of an electron transfer chain functioning in an early step of cytosolic Fe-S biogenesis, facilitating the de novo assembly of a [4Fe-4S] cluster on the scaffold complex NUBP1-NUBP2. Electrons are transferred to CIAPIN1 from NADPH via the FAD- and FMN-containing protein NDOR1. NDOR1-CIAPIN1 are also required for the assembly of the diferric tyrosyl radical cofactor of ribonucleotide reductase (RNR), probably by providing electrons for reduction during radical cofactor maturation in the catalytic small subunit. Has anti-apoptotic effects in the cell. Involved in negative control of cell death upon cytokine withdrawal. Promotes development of hematopoietic cells. In Gallus gallus (Chicken), this protein is Anamorsin.